The primary structure comprises 554 residues: Glutamine--tRNA ligase (554 aa).

The 'HIGH' region motif lies at 34 to 44; the sequence is PEPNGYLHIGH. ATP contacts are provided by residues 35–37 and 41–47; these read EPN and HIGHAKS. Positions 67 and 212 each coordinate L-glutamine. ATP contacts are provided by residues threonine 231, 261–262, and 269–271; these read RL and MSK. Positions 268–272 match the 'KMSKS' region motif; the sequence is VMSKR. Residues 317–324 form an interaction with tRNA region; the sequence is TKQDNTIE.

Belongs to the class-I aminoacyl-tRNA synthetase family. Monomer.

Its subcellular location is the cytoplasm. The enzyme catalyses tRNA(Gln) + L-glutamine + ATP = L-glutaminyl-tRNA(Gln) + AMP + diphosphate. The chain is Glutamine--tRNA ligase from Shigella flexneri serotype 5b (strain 8401).